Here is a 188-residue protein sequence, read N- to C-terminus: dCTP deaminase (188 aa).

Residues 111-116 (KSTYAR), 135-137 (TLE), Gln156, Tyr170, and Gln180 contribute to the dCTP site. Glu137 (proton donor/acceptor) is an active-site residue.

This sequence belongs to the dCTP deaminase family. Homotrimer.

The catalysed reaction is dCTP + H2O + H(+) = dUTP + NH4(+). It participates in pyrimidine metabolism; dUMP biosynthesis; dUMP from dCTP (dUTP route): step 1/2. Catalyzes the deamination of dCTP to dUTP. The protein is dCTP deaminase of Methylococcus capsulatus (strain ATCC 33009 / NCIMB 11132 / Bath).